A 105-amino-acid chain; its full sequence is Cuticle protein AMP4 (105 aa).

The disordered stretch occupies residues 1–21; that stretch reads DRDAQTLTDERNDQGDGNFRY. The Chitin-binding type R&amp;R domain occupies 16-81; that stretch reads DGNFRYEFET…PSSDLLPVGP (66 aa).

Arthrodial membrane.

In Homarus americanus (American lobster), this protein is Cuticle protein AMP4.